Reading from the N-terminus, the 167-residue chain is MVLMVVFSVMFLISLIAVASNPSPYFAAFGLMVGAGVGCGMLMQCGMTFLSMILFLIYLGGMLVVFAYSPALAAEPYPNAWGSWEVFSYVLVYMFLVIVAWVAFVGDMELFDDVEEYFGAMRRYVGVAEVYNAGGYMLFIAGWVLLMALLVVLELTRGYSRGCLRAV.

Helical transmembrane passes span 1–21, 23–43, 47–67, 86–106, and 133–153; these read MVLMVVFSVMFLISLIAVASN, SPYFAAFGLMVGAGVGCGMLM, MTFLSMILFLIYLGGMLVVFA, VFSYVLVYMFLVIVAWVAFVG, and AGGYMLFIAGWVLLMALLVVL.

This sequence belongs to the complex I subunit 6 family.

The protein resides in the mitochondrion membrane. It catalyses the reaction a ubiquinone + NADH + 5 H(+)(in) = a ubiquinol + NAD(+) + 4 H(+)(out). Its function is as follows. Core subunit of the mitochondrial membrane respiratory chain NADH dehydrogenase (Complex I) that is believed to belong to the minimal assembly required for catalysis. Complex I functions in the transfer of electrons from NADH to the respiratory chain. The immediate electron acceptor for the enzyme is believed to be ubiquinone. This is NADH-ubiquinone oxidoreductase chain 6 (MT-ND6) from Polypterus ornatipinnis (Ornate bichir).